Consider the following 479-residue polypeptide: Protein ORD (479 aa).

Residues 102–140 form a disordered region; sequence KEEETEPESESDLDEGPSTSKQALERMVQRAERKAKEAS. Positions 104–116 are enriched in acidic residues; it reads EETEPESESDLDE. Residues 124–140 show a composition bias toward basic and acidic residues; sequence ALERMVQRAERKAKEAS.

As to quaternary structure, interacts with Sce.

It is found in the nucleus. Its subcellular location is the chromosome. The protein localises to the centromere. Essential for proper maintenance of sister-chromatid cohesion in both male and female meiosis. Mutations in ord cause premature separation of the sister chromatids in meiosis I and random segregation in both meiotic divisions. Required for chiasma maintenance in female meiosis. Mutations in ord reduce recombination in female meiosis. The polypeptide is Protein ORD (ord) (Drosophila melanogaster (Fruit fly)).